A 249-amino-acid polypeptide reads, in one-letter code: 2,3-bisphosphoglycerate-dependent phosphoglycerate mutase (249 aa).

Residues 9-16, 22-23, arginine 61, 88-91, lysine 99, 115-116, and 184-185 contribute to the substrate site; these read RHGQSQWN, TG, ERHY, RR, and GN. The active-site Tele-phosphohistidine intermediate is the histidine 10. Glutamate 88 serves as the catalytic Proton donor/acceptor.

The protein belongs to the phosphoglycerate mutase family. BPG-dependent PGAM subfamily. As to quaternary structure, homodimer.

The enzyme catalyses (2R)-2-phosphoglycerate = (2R)-3-phosphoglycerate. The protein operates within carbohydrate degradation; glycolysis; pyruvate from D-glyceraldehyde 3-phosphate: step 3/5. Its function is as follows. Catalyzes the interconversion of 2-phosphoglycerate and 3-phosphoglycerate. This Xanthomonas campestris pv. campestris (strain B100) protein is 2,3-bisphosphoglycerate-dependent phosphoglycerate mutase.